The following is a 393-amino-acid chain: SH3 domain-binding protein 5-like (393 aa).

Disordered stretches follow at residues 1 to 59 (MAEL…LDPR) and 272 to 332 (HARR…DTDT). Thr13 is modified (phosphothreonine). Basic and acidic residues predominate over residues 18–28 (LRPEVVEDEVP). Residues Ser30 and Ser49 each carry the phosphoserine modification. 2 coiled-coil regions span residues 59–140 (RIQE…YERA) and 169–272 (WQEM…EQIH). A compositionally biased stretch (gly residues) spans 304–313 (GDSGIEGAEG). Over residues 317–332 (EEGSSLGPGPAPDTDT) the composition is skewed to low complexity. Ser343, Ser350, Ser358, Ser362, and Ser378 each carry phosphoserine. The disordered stretch occupies residues 364–393 (DGQELGTRSGGRRGSDGGVRGGRHQRSVSL). The span at 384 to 393 (GGRHQRSVSL) shows a compositional bias: basic residues.

It belongs to the SH3BP5 family.

Its function is as follows. Functions as a guanine nucleotide exchange factor (GEF) for RAB11A. This chain is SH3 domain-binding protein 5-like (SH3BP5L), found in Pongo abelii (Sumatran orangutan).